Reading from the N-terminus, the 510-residue chain is L-2,4-diaminobutyrate decarboxylase (510 aa).

N6-(pyridoxal phosphate)lysine is present on lysine 319.

This sequence belongs to the group II decarboxylase family. The cofactor is pyridoxal 5'-phosphate.

The enzyme catalyses L-2,4-diaminobutanoate + H(+) = propane-1,3-diamine + CO2. It participates in amine and polyamine biosynthesis; 1,3-diaminopropane biosynthesis; 1,3-diaminopropane from L-aspartate 4-semialdehyde: step 2/2. In Acinetobacter baumannii, this protein is L-2,4-diaminobutyrate decarboxylase (ddc).